Reading from the N-terminus, the 124-residue chain is Small ribosomal subunit protein uS12 (124 aa).

Position 89 is a 3-methylthioaspartic acid (Asp89). The interval 105 to 124 (QGVKNRKQARSRYGAKKEKS) is disordered. A compositionally biased stretch (basic residues) spans 108–118 (KNRKQARSRYG).

It belongs to the universal ribosomal protein uS12 family. In terms of assembly, part of the 30S ribosomal subunit. Contacts proteins S8 and S17. May interact with IF1 in the 30S initiation complex.

Functionally, with S4 and S5 plays an important role in translational accuracy. Its function is as follows. Interacts with and stabilizes bases of the 16S rRNA that are involved in tRNA selection in the A site and with the mRNA backbone. Located at the interface of the 30S and 50S subunits, it traverses the body of the 30S subunit contacting proteins on the other side and probably holding the rRNA structure together. The combined cluster of proteins S8, S12 and S17 appears to hold together the shoulder and platform of the 30S subunit. This is Small ribosomal subunit protein uS12 from Mycobacterium sp. (strain JLS).